Consider the following 977-residue polypeptide: Disks large-associated protein 1 (977 aa).

Disordered stretches follow at residues 150–203 and 349–371; these read TKSH…GWWS and KAMG…KVAA. Ser169, Ser356, Ser359, Ser362, Ser366, Ser383, Ser412, Ser415, Ser419, Ser422, Ser431, Ser503, Ser510, and Ser562 each carry phosphoserine. Phosphothreonine is present on Thr563. Phosphoserine is present on residues Ser565 and Ser589. Thr590 carries the phosphothreonine modification. Phosphoserine is present on residues Ser592 and Ser595. Interaction with DYL2 stretches follow at residues 650 to 661 and 672 to 683; these read LSIGIQVDDAEE and SKFQSVGVQVEE. The tract at residues 899–965 is disordered; that stretch reads WKQMDPLDKK…QNSATESAES (67 aa). Composition is skewed to basic and acidic residues over residues 903–912 and 928–943; these read DPLDKKERRA and IRER…EARK. Position 932 is a phosphoserine (Ser932). A compositionally biased stretch (polar residues) spans 954-963; that stretch reads VRQNSATESA. A PDZ-binding motif is present at residues 975 to 977; that stretch reads TRL.

The protein belongs to the SAPAP family. In terms of assembly, interacts with guanylate kinase-like domain of DLG1, DLG2, DLG3, DLG4 and AIP1. Interacts with the PDZ domain of SHANK1, SHANK2 and SHANK3. Found in a complex with DLG4 and SHANK1, SHANK2 or SHANK3. Found in a complex with DLG4 and BEGAIN. Interacts with DYL2 and LRFN1. Interacts with MPP2 (via the SH3-Guanylate kinase-like sub-module). Ubiquitinated by TRIM3; leading to proteasomal degradation. Expressed in brain.

It is found in the cell membrane. The protein resides in the postsynaptic density. Its subcellular location is the synapse. Functionally, part of the postsynaptic scaffold in neuronal cells. This Homo sapiens (Human) protein is Disks large-associated protein 1 (DLGAP1).